Reading from the N-terminus, the 1519-residue chain is DNA (cytosine-5)-methyltransferase 4 (1519 aa).

Residues 1–24 are compositionally biased toward basic and acidic residues; it reads MEMETKAGKQKKRSVDSDDDVSKE. Positions 1-31 are disordered; the sequence is MEMETKAGKQKKRSVDSDDDVSKERRPKRAA. Residue Lys-583 forms a Glycyl lysine isopeptide (Lys-Gly) (interchain with G-Cter in ubiquitin) linkage. The segment at 641–668 is disordered; it reads ENVEEEELEEVEEEDENEEDDPEENELE. Over residues 642 to 668 the composition is skewed to acidic residues; the sequence is NVEEEELEEVEEEDENEEDDPEENELE. BAH domains are found at residues 715–849 and 916–1033; these read DVVV…FSLP and TTLK…KQFP. The SAM-dependent MTase C5-type domain occupies 1078–1512; the sequence is LATLDIFAGC…RKLKEALYLK (435 aa). The active site involves Cys-1183.

It belongs to the class I-like SAM-binding methyltransferase superfamily. C5-methyltransferase family. As to expression, expressed at low levels in vegetative and floral organs.

It localises to the nucleus. It carries out the reaction a 2'-deoxycytidine in DNA + S-adenosyl-L-methionine = a 5-methyl-2'-deoxycytidine in DNA + S-adenosyl-L-homocysteine + H(+). Maintains chromatin CpG methylation that plays a role in genomic imprinting, regulation of embryogenesis and seed viability. Required for proper patterns of CG DNA methylation in dividing cells. This is DNA (cytosine-5)-methyltransferase 4 (MET4) from Arabidopsis thaliana (Mouse-ear cress).